The chain runs to 631 residues: 1-deoxy-D-xylulose-5-phosphate synthase (631 aa).

Residues H87 and G128–S130 contribute to the thiamine diphosphate site. Residue D159 coordinates Mg(2+). Thiamine diphosphate-binding positions include G160–A161, N188, F295, and E378. Residue N188 participates in Mg(2+) binding.

The protein belongs to the transketolase family. DXPS subfamily. As to quaternary structure, homodimer. Mg(2+) is required as a cofactor. The cofactor is thiamine diphosphate.

It carries out the reaction D-glyceraldehyde 3-phosphate + pyruvate + H(+) = 1-deoxy-D-xylulose 5-phosphate + CO2. It functions in the pathway metabolic intermediate biosynthesis; 1-deoxy-D-xylulose 5-phosphate biosynthesis; 1-deoxy-D-xylulose 5-phosphate from D-glyceraldehyde 3-phosphate and pyruvate: step 1/1. Functionally, catalyzes the acyloin condensation reaction between C atoms 2 and 3 of pyruvate and glyceraldehyde 3-phosphate to yield 1-deoxy-D-xylulose-5-phosphate (DXP). This Pseudomonas syringae pv. tomato (strain ATCC BAA-871 / DC3000) protein is 1-deoxy-D-xylulose-5-phosphate synthase.